The sequence spans 336 residues: Glyceraldehyde-3-phosphate dehydrogenase 1 (336 aa).

Residues 12–13 (RI), D34, and R79 contribute to the NAD(+) site. D-glyceraldehyde 3-phosphate contacts are provided by residues 149-151 (SCT), T180, 209-210 (TG), and R232. Catalysis depends on C150, which acts as the Nucleophile. Residue N314 coordinates NAD(+).

This sequence belongs to the glyceraldehyde-3-phosphate dehydrogenase family. Homotetramer.

The protein resides in the cytoplasm. The catalysed reaction is D-glyceraldehyde 3-phosphate + phosphate + NAD(+) = (2R)-3-phospho-glyceroyl phosphate + NADH + H(+). It functions in the pathway carbohydrate degradation; glycolysis; pyruvate from D-glyceraldehyde 3-phosphate: step 1/5. With respect to regulation, inhibited by koningic acid through the interaction of cysteine residues with koningic acid even at very low concentrations. The chain is Glyceraldehyde-3-phosphate dehydrogenase 1 (gpd1) from Trichoderma koningii (Hypocrea koningii).